A 188-amino-acid chain; its full sequence is dTTP/UTP pyrophosphatase (188 aa).

The Proton acceptor role is filled by Asp-70.

The protein belongs to the Maf family. YhdE subfamily. Requires a divalent metal cation as cofactor.

The protein resides in the cytoplasm. It catalyses the reaction dTTP + H2O = dTMP + diphosphate + H(+). It carries out the reaction UTP + H2O = UMP + diphosphate + H(+). Its function is as follows. Nucleoside triphosphate pyrophosphatase that hydrolyzes dTTP and UTP. May have a dual role in cell division arrest and in preventing the incorporation of modified nucleotides into cellular nucleic acids. This Clostridium beijerinckii (strain ATCC 51743 / NCIMB 8052) (Clostridium acetobutylicum) protein is dTTP/UTP pyrophosphatase.